Consider the following 179-residue polypeptide: Centromere protein R (179 aa).

Residues 1–79 (MSAKRSLKLD…RLSRRGQPQT (79 aa)) are disordered. The span at 30–50 (NSYSPTTGTCQISPFSSPTSH) shows a compositional bias: polar residues. Residues 51–64 (NAEDLRNGLSHGDE) show a composition bias toward basic and acidic residues. Residues 172–176 (LQLLL) carry the LXXLL motif motif.

The protein localises to the nucleus. The protein resides in the chromosome. It is found in the centromere. Its subcellular location is the kinetochore. Its function is as follows. Transcription coregulator that can have both coactivator and corepressor functions. Involved in the coactivation of nuclear receptors for retinoid X (RXRs) and thyroid hormone (TRs) in a ligand-dependent fashion. Probable component of a centromeric complex involved in assembly of kinetochore proteins, mitotic progression and chromosome segregation. The polypeptide is Centromere protein R (CENPR) (Gallus gallus (Chicken)).